Consider the following 288-residue polypeptide: 4-hydroxy-tetrahydrodipicolinate synthase (288 aa).

Pyruvate is bound at residue T47. Y136 functions as the Proton donor/acceptor in the catalytic mechanism. K164 (schiff-base intermediate with substrate) is an active-site residue. I204 is a pyruvate binding site.

The protein belongs to the DapA family. Homotetramer; dimer of dimers.

Its subcellular location is the cytoplasm. The catalysed reaction is L-aspartate 4-semialdehyde + pyruvate = (2S,4S)-4-hydroxy-2,3,4,5-tetrahydrodipicolinate + H2O + H(+). It participates in amino-acid biosynthesis; L-lysine biosynthesis via DAP pathway; (S)-tetrahydrodipicolinate from L-aspartate: step 3/4. Functionally, catalyzes the condensation of (S)-aspartate-beta-semialdehyde [(S)-ASA] and pyruvate to 4-hydroxy-tetrahydrodipicolinate (HTPA). The chain is 4-hydroxy-tetrahydrodipicolinate synthase from Leuconostoc mesenteroides subsp. mesenteroides (strain ATCC 8293 / DSM 20343 / BCRC 11652 / CCM 1803 / JCM 6124 / NCDO 523 / NBRC 100496 / NCIMB 8023 / NCTC 12954 / NRRL B-1118 / 37Y).